A 293-amino-acid polypeptide reads, in one-letter code: MNQSINFPNNLQNNSNINNALKYLTKIIPNNKYPQQNQSHNNTTPVVTNAINPIEKLNVEEITYLQKYLENIKNKKLNLNKQSNNQTNNQTNNQTNNQTNNQTNNIRPQINNNKQPISKIQTNRTNEIYDPLKREMPIDWRILPANSLNNFRNNAFDANVFEPGSRGATSTRIGKKAQFNNPYDYGSKQNSFENVFQKPCNDPYVYDNNMLNQLNINEVPNNLRPNDLRNVDVESSLLQRESVHLPGQRNISEREFNRWNMLPFDPQDHRHIVWEDNMPRGGYATRAERLDDN.

Residues 65 to 89 (LQKYLENIKNKKLNLNKQSNNQTNN) adopt a coiled-coil conformation. Residues 81–112 (KQSNNQTNNQTNNQTNNQTNNQTNNIRPQINN) are disordered.

The protein resides in the virion. This is an uncharacterized protein from Acanthamoeba polyphaga mimivirus (APMV).